A 274-amino-acid polypeptide reads, in one-letter code: 2,3,4,5-tetrahydropyridine-2,6-dicarboxylate N-succinyltransferase (274 aa).

The protein belongs to the transferase hexapeptide repeat family.

The protein resides in the cytoplasm. The enzyme catalyses (S)-2,3,4,5-tetrahydrodipicolinate + succinyl-CoA + H2O = (S)-2-succinylamino-6-oxoheptanedioate + CoA. The protein operates within amino-acid biosynthesis; L-lysine biosynthesis via DAP pathway; LL-2,6-diaminopimelate from (S)-tetrahydrodipicolinate (succinylase route): step 1/3. This Shigella boydii serotype 18 (strain CDC 3083-94 / BS512) protein is 2,3,4,5-tetrahydropyridine-2,6-dicarboxylate N-succinyltransferase.